Consider the following 240-residue polypeptide: Putative outer membrane protein RT0057 (240 aa).

Residues 1–20 form the signal peptide; it reads MLKKLCVILFISSITINSHA.

Belongs to the OmpW/AlkL family.

The protein resides in the cell outer membrane. The chain is Putative outer membrane protein RT0057 from Rickettsia typhi (strain ATCC VR-144 / Wilmington).